Here is a 440-residue protein sequence, read N- to C-terminus: uncharacterized protein (440 aa).

2 disordered regions span residues 49–81 (CPPA…EPSL) and 162–295 (LPKP…CASE). Residues 55–80 (HGHSSLRTNLNSSPPRCPQNPGTEPS) are compositionally biased toward polar residues. The span at 249–266 (YREELSNTKSRFSEDKGS) shows a compositional bias: basic and acidic residues. Low complexity predominate over residues 274-284 (SSNSSEPGLPG).

The protein belongs to the tymoviridae protein p69 family.

This is an uncharacterized protein from Erysimum latent virus (ELV).